The sequence spans 121 residues: NADH-quinone oxidoreductase subunit A (121 aa).

The next 3 membrane-spanning stretches (helical) occupy residues 8 to 28 (YLPI…TIIG), 65 to 85 (LVAI…PWAI), and 93 to 113 (QGMI…FYII).

Belongs to the complex I subunit 3 family. NDH-1 is composed of 14 different subunits. Subunits NuoA, H, J, K, L, M, N constitute the membrane sector of the complex.

It localises to the cell inner membrane. The enzyme catalyses a quinone + NADH + 5 H(+)(in) = a quinol + NAD(+) + 4 H(+)(out). Its function is as follows. NDH-1 shuttles electrons from NADH, via FMN and iron-sulfur (Fe-S) centers, to quinones in the respiratory chain. The immediate electron acceptor for the enzyme in this species is believed to be a menaquinone. Couples the redox reaction to proton translocation (for every two electrons transferred, four hydrogen ions are translocated across the cytoplasmic membrane), and thus conserves the redox energy in a proton gradient. In Flavobacterium psychrophilum (strain ATCC 49511 / DSM 21280 / CIP 103535 / JIP02/86), this protein is NADH-quinone oxidoreductase subunit A.